We begin with the raw amino-acid sequence, 394 residues long: Aspergillopepsin-1 (394 aa).

An N-terminal signal peptide occupies residues 1–20 (MVVFSKVTAAVFGLATIASA). Residues 21-69 (APAPPTRKGFTVQQQARPAQKKQVNLPAMYAHALTKFGGSVPESVKVAA) constitute a propeptide, activation peptide. A Peptidase A1 domain is found at 85 to 391 (YLTPVNVGGT…DSEGPRLGFA (307 aa)). Catalysis depends on residues Asp101 and Asp283. An intrachain disulfide couples Cys319 to Cys354.

It belongs to the peptidase A1 family. Monomer.

It is found in the secreted. The enzyme catalyses Hydrolysis of proteins with broad specificity. Generally favors hydrophobic residues in P1 and P1', but also accepts Lys in P1, which leads to activation of trypsinogen. Does not clot milk.. In terms of biological role, secreted aspartic endopeptidase that allows assimilation of proteinaceous substrates. The scissile peptide bond is attacked by a nucleophilic water molecule activated by two aspartic residues in the active site. Shows a broad primary substrate specificity. Favors hydrophobic residues at the P1 and P1' positions, but also accepts a lysine residue in the P1 position, leading to the activation of trypsinogen and chymotrypsinogen A. In Aspergillus clavatus (strain ATCC 1007 / CBS 513.65 / DSM 816 / NCTC 3887 / NRRL 1 / QM 1276 / 107), this protein is Aspergillopepsin-1 (pepA).